We begin with the raw amino-acid sequence, 201 residues long: Cytochrome c4 (201 aa).

Positions 1–20 (MNKLLVSLLLTLGLTGLAHA) are cleaved as a signal peptide. Heme c-binding residues include C34, C37, H38, M77, C130, C133, H134, and M178.

Post-translationally, binds 2 heme c groups covalently per subunit.

It localises to the periplasm. Functionally, diheme, high potential cytochrome c believed to be an intermediate electron donor to terminal oxidation systems. This chain is Cytochrome c4 (cc4), found in Pseudomonas aeruginosa (strain ATCC 15692 / DSM 22644 / CIP 104116 / JCM 14847 / LMG 12228 / 1C / PRS 101 / PAO1).